The following is a 156-amino-acid chain: Class I hydrophobin B (156 aa).

The first 18 residues, 1 to 18 (MQFTLSAVVLALAGFSAA), serve as a signal peptide directing secretion. 4 cysteine pairs are disulfide-bonded: cysteine 52–cysteine 130, cysteine 60–cysteine 124, cysteine 61–cysteine 101, and cysteine 131–cysteine 149.

Belongs to the fungal hydrophobin family.

It localises to the secreted. The protein resides in the cell wall. Its function is as follows. Aerial growth, conidiation, and dispersal of filamentous fungi in the environment rely upon a capability of their secreting small amphipathic proteins called hydrophobins (HPBs) with low sequence identity. Class I can self-assemble into an outermost layer of rodlet bundles on aerial cell surfaces, conferring cellular hydrophobicity that supports fungal growth, development and dispersal; whereas Class II form highly ordered films at water-air interfaces through intermolecular interactions but contribute nothing to the rodlet structure. In P.expansum, hydrophobins contribute to germination, tolerance to cold stress and mycotoxins patulin and citrinin production. HfbA and HfbB are essential for fungal surface hydrophobicity. The polypeptide is Class I hydrophobin B (Penicillium expansum (Blue mold rot fungus)).